A 465-amino-acid chain; its full sequence is Protein unc-93 homolog A (465 aa).

The next 5 helical transmembrane spans lie at 8 to 28, 40 to 60, 71 to 91, 96 to 118, and 140 to 160; these read VLVV…LQSL, VISL…LPPI, IVVS…PGWA, TSAI…LTIS, and IFFF…SLIF. 2 N-linked (GlcNAc...) asparagine glycosylation sites follow: asparagine 183 and asparagine 189. The chain crosses the membrane as a helical span at residues 200–220; sequence TLLGCYIGVGLLAIIFVAVFL. N-linked (GlcNAc...) asparagine glycosylation is present at asparagine 237. 5 helical membrane-spanning segments follow: residues 256 to 276, 281 to 301, 319 to 339, 343 to 363, and 410 to 427; these read LLLL…LSGE, YVTC…FAAS, IALF…LLYW, PDQL…DAVW, and IYIA…YLYV.

This sequence belongs to the unc-93 family.

The protein resides in the membrane. The sequence is that of Protein unc-93 homolog A (unc93a) from Danio rerio (Zebrafish).